Consider the following 445-residue polypeptide: Ribosomal protein uS12 methylthiotransferase RimO (445 aa).

The region spanning 10-120 is the MTTase N-terminal domain; that stretch reads PKVGFVSLGC…VVNAVHEVVP (111 aa). 6 residues coordinate [4Fe-4S] cluster: Cys19, Cys55, Cys84, Cys153, Cys157, and Cys160. The Radical SAM core domain occupies 139–378; the sequence is LTPRHYAYLK…AHQQAISSAR (240 aa). In terms of domain architecture, TRAM spans 380–445; it reads QLRIGREIEV…DEYDLWAEQI (66 aa).

It belongs to the methylthiotransferase family. RimO subfamily. Requires [4Fe-4S] cluster as cofactor.

Its subcellular location is the cytoplasm. It catalyses the reaction L-aspartate(89)-[ribosomal protein uS12]-hydrogen + (sulfur carrier)-SH + AH2 + 2 S-adenosyl-L-methionine = 3-methylsulfanyl-L-aspartate(89)-[ribosomal protein uS12]-hydrogen + (sulfur carrier)-H + 5'-deoxyadenosine + L-methionine + A + S-adenosyl-L-homocysteine + 2 H(+). In terms of biological role, catalyzes the methylthiolation of an aspartic acid residue of ribosomal protein uS12. This Pseudomonas fluorescens (strain Pf0-1) protein is Ribosomal protein uS12 methylthiotransferase RimO.